We begin with the raw amino-acid sequence, 352 residues long: UDP-N-acetylglucosamine--N-acetylmuramyl-(pentapeptide) pyrophosphoryl-undecaprenol N-acetylglucosamine transferase (352 aa).

UDP-N-acetyl-alpha-D-glucosamine contacts are provided by residues 14–16, Asn-124, Arg-164, Ser-185, and Gln-285; that span reads TGG.

It belongs to the glycosyltransferase 28 family. MurG subfamily.

The protein localises to the cell inner membrane. The catalysed reaction is di-trans,octa-cis-undecaprenyl diphospho-N-acetyl-alpha-D-muramoyl-L-alanyl-D-glutamyl-meso-2,6-diaminopimeloyl-D-alanyl-D-alanine + UDP-N-acetyl-alpha-D-glucosamine = di-trans,octa-cis-undecaprenyl diphospho-[N-acetyl-alpha-D-glucosaminyl-(1-&gt;4)]-N-acetyl-alpha-D-muramoyl-L-alanyl-D-glutamyl-meso-2,6-diaminopimeloyl-D-alanyl-D-alanine + UDP + H(+). The protein operates within cell wall biogenesis; peptidoglycan biosynthesis. Cell wall formation. Catalyzes the transfer of a GlcNAc subunit on undecaprenyl-pyrophosphoryl-MurNAc-pentapeptide (lipid intermediate I) to form undecaprenyl-pyrophosphoryl-MurNAc-(pentapeptide)GlcNAc (lipid intermediate II). The protein is UDP-N-acetylglucosamine--N-acetylmuramyl-(pentapeptide) pyrophosphoryl-undecaprenol N-acetylglucosamine transferase of Chlamydia trachomatis serovar L2 (strain ATCC VR-902B / DSM 19102 / 434/Bu).